The sequence spans 125 residues: Fluoride-specific ion channel FluC (125 aa).

Helical transmembrane passes span 4-24 (IALV…VGVW), 35-55 (WGTL…VELV), 68-88 (FLVT…LDAV), and 100-120 (AFYI…GLAL). Residues Gly75 and Thr78 each coordinate Na(+).

The protein belongs to the fluoride channel Fluc/FEX (TC 1.A.43) family.

The protein localises to the cell inner membrane. It carries out the reaction fluoride(in) = fluoride(out). Its activity is regulated as follows. Na(+) is not transported, but it plays an essential structural role and its presence is essential for fluoride channel function. Its function is as follows. Fluoride-specific ion channel. Important for reducing fluoride concentration in the cell, thus reducing its toxicity. This Agrobacterium fabrum (strain C58 / ATCC 33970) (Agrobacterium tumefaciens (strain C58)) protein is Fluoride-specific ion channel FluC.